A 229-amino-acid chain; its full sequence is Putative germin-like protein 12-4 (229 aa).

The signal sequence occupies residues 1–22; the sequence is MAASNFFLLTAFIALVATQAMA. Cysteines 32 and 47 form a disulfide. The Cupin type-1 domain maps to 62–217; that stretch reads ANLDKPMDTT…AFQVDKKAMD (156 aa). Asn78 is a glycosylation site (N-linked (GlcNAc...) asparagine). 4 residues coordinate Mn(2+): His111, His113, Glu118, and His162.

Belongs to the germin family. Oligomer (believed to be a pentamer but probably hexamer).

The protein localises to the secreted. Its subcellular location is the extracellular space. It localises to the apoplast. Its function is as follows. May play a role in plant defense. Probably has no oxalate oxidase activity even if the active site is conserved. The sequence is that of Putative germin-like protein 12-4 from Oryza sativa subsp. japonica (Rice).